The chain runs to 484 residues: MQPPSQDWASLLPAAWSEARQILRKKCGSRTFESWLKSLMLADFDSQKKIIRLACPSEFMANWISSHLSDELLLAWRTVWPGIAEVKVSVRNPESQPLLLDVTEIELPLGDQPRPLPKKPAKKKQSVPATPKSTSPEKKAEGEDQNQFEERYNFDNFVVGKANDLAYRAACTFAEGGKLDFNPLFLYGGTGLGKTHLMHAVGIEYLKRHPNSTALYMSAEKFMYDFVASMRAKDTHSFKARLRSADLLMIDDVQFIAGKDSTQEEFFHTMNEVITAGRRLVISADRSPQDLERIESRILSRLSWGLVADVNPADFELRLNIILKKLEAMPQVSMPEDIVFFLAKRICTNVRELEGALNRVVAYATLSNRPINMDFVTETLADLLRTTQQRVTVEDIQKRVCDHYHLKLADMSSKRRDRVIARPRQVAMYLSKQLTSRSLPEIGQRFGGRDHTTVIHAIRQIEKLRITDEDVDSDVRLLMRQFEG.

The interval 1-83 is domain I, interacts with DnaA modulators; the sequence is MQPPSQDWAS…LAWRTVWPGI (83 aa). Residues 83-146 are domain II; that stretch reads IAEVKVSVRN…EKKAEGEDQN (64 aa). The interval 110–146 is disordered; that stretch reads GDQPRPLPKKPAKKKQSVPATPKSTSPEKKAEGEDQN. Basic residues predominate over residues 116 to 125; sequence LPKKPAKKKQ. The span at 135-146 shows a compositional bias: basic and acidic residues; it reads SPEKKAEGEDQN. Residues 147–364 are domain III, AAA+ region; that stretch reads QFEERYNFDN…GALNRVVAYA (218 aa). Residues Gly191, Gly193, Lys194, and Thr195 each contribute to the ATP site. The tract at residues 365 to 484 is domain IV, binds dsDNA; it reads TLSNRPINMD…VRLLMRQFEG (120 aa).

Belongs to the DnaA family. Oligomerizes as a right-handed, spiral filament on DNA at oriC.

The protein resides in the cytoplasm. In terms of biological role, plays an essential role in the initiation and regulation of chromosomal replication. ATP-DnaA binds to the origin of replication (oriC) to initiate formation of the DNA replication initiation complex once per cell cycle. Binds the DnaA box (a 9 base pair repeat at the origin) and separates the double-stranded (ds)DNA. Forms a right-handed helical filament on oriC DNA; dsDNA binds to the exterior of the filament while single-stranded (ss)DNA is stabiized in the filament's interior. The ATP-DnaA-oriC complex binds and stabilizes one strand of the AT-rich DNA unwinding element (DUE), permitting loading of DNA polymerase. After initiation quickly degrades to an ADP-DnaA complex that is not apt for DNA replication. Binds acidic phospholipids. This Zymomonas mobilis subsp. mobilis (strain ATCC 31821 / ZM4 / CP4) protein is Chromosomal replication initiator protein DnaA.